We begin with the raw amino-acid sequence, 715 residues long: Palmitoyltransferase ZDHHC5 (715 aa).

Residues 1–13 (MPAESGKRFKPSK) lie on the Cytoplasmic side of the membrane. A helical transmembrane segment spans residues 14–34 (YVPVSAAAIFLVGATTLFFAF). Topologically, residues 35 to 52 (TCPGLSLNVSPAVPIYNA) are extracellular. The helical transmembrane segment at 53–73 (IMFLFVLANFSMATFMDPGIF) threads the bilayer. Topologically, residues 74 to 148 (PRAEEDEDKE…NCIGRRNYRY (75 aa)) are cytoplasmic. Tyr91 is modified (phosphotyrosine). Residues 104-154 (KWCATCRFYRPPRCSHCSVCDNCVEEFDHHCPWVNNCIGRRNYRYFFLFLL) form the DHHC domain. Catalysis depends on Cys134, which acts as the S-palmitoyl cysteine intermediate. The helical transmembrane segment at 149–169 (FFLFLLSLTAHIMGVFGFGLL) threads the bilayer. Topologically, residues 170 to 191 (YVLYHIEELSGVRTAVTMAVMC) are extracellular. A helical transmembrane segment spans residues 192 to 212 (VAGLFFIPVAGLTGFHVVLVA). Topologically, residues 213–715 (RGRTTNEQVT…VGGTTYEISV (503 aa)) are cytoplasmic. Position 247 is a phosphoserine (Ser247). Residues 289-715 (GELRRTKSKG…VGGTTYEISV (427 aa)) are disordered. Thr294 is modified (phosphothreonine). Residues Ser296 and Ser299 each carry the phosphoserine modification. Thr303 carries the post-translational modification Phosphothreonine. The residue at position 345 (Ser345) is a Phosphoserine. Residues Thr348 and Thr350 each carry the phosphothreonine modification. A compositionally biased stretch (low complexity) spans 359-373 (SSSSTSAAMPHSSSA). Residues Ser380, Ser398, Ser406, and Ser409 each carry the phosphoserine modification. Thr411 carries the phosphothreonine modification. 4 positions are modified to phosphoserine: Ser415, Ser425, Ser429, and Ser432. Positions 422-432 (SSGSRSSSLKS) are enriched in low complexity. Thr436 is subject to Phosphothreonine. Positions 442 to 478 (QLQSIRSEGTTSTSYKSLANQTRNGSLSYDSLLTPSD) are enriched in polar residues. Phosphoserine is present on residues Ser529 and Ser554. Residues 581-597 (PRTSSSSDDSKRSPLSK) show a composition bias toward low complexity. An Omega-N-methylarginine modification is found at Arg617. Position 621 is a phosphoserine (Ser621). Position 659 is a phosphothreonine (Thr659). A compositionally biased stretch (polar residues) spans 666–677 (LKTTYSKSNGQP). A phosphoserine mark is found at Ser684 and Ser694. Arg697 is modified (omega-N-methylarginine).

The protein belongs to the DHHC palmitoyltransferase family. ERF2/ZDHHC9 subfamily. Phosphorylation regulates association with endocytic proteins and its subcellular localization. Phosphorylation by LYN during fatty acid uptake leads to inactivation of the activity. In terms of processing, autopalmitoylated. Palmitoylation of the C-terminal tail regulates stimulation-dependent plasma membrane motility. As to expression, highly enriched in brain, detectable in liver and heart, and undetectable in most other tissues.

The protein localises to the cell membrane. The catalysed reaction is L-cysteinyl-[protein] + hexadecanoyl-CoA = S-hexadecanoyl-L-cysteinyl-[protein] + CoA. Its function is as follows. Palmitoyltransferase that catalyzes the addition of palmitate onto various protein substrates such as CTNND2, CD36, GSDMD, NLRP3, NOD1, NOD2, STAT3 and S1PR1 thus plays a role in various biological processes including cell adhesion, inflammation, fatty acid uptake, bacterial sensing or cardiac functions. Plays an important role in the regulation of synapse efficacy by mediating palmitoylation of delta-catenin/CTNND2, thereby increasing synaptic delivery and surface stabilization of alpha-amino-3-hydroxy-5-methyl-4-isoxazole propionic acid receptors (AMPARs). Under basal conditions, remains at the synaptic membrane through FYN-mediated phosphorylation that prevents association with endocytic proteins. Neuronal activity enhances the internalization and trafficking of DHHC5 from spines to dendritic shafts where it palmitoylates delta-catenin/CTNND2. Regulates cell adhesion at the plasma membrane by palmitoylating GOLGA7B and DSG2. Plays a role in innate immune response by mediating the palmitoylation of NOD1 and NOD2 and their proper recruitment to the bacterial entry site and phagosomes. Also participates in fatty acid uptake by palmitoylating CD36 and thereby targeting it to the plasma membrane. Upon binding of fatty acids to CD36, gets phosphorylated by LYN leading to inactivation and subsequent CD36 caveolar endocytosis. Controls oligodendrocyte development by catalyzing STAT3 palmitoylation. Acts as a regulator of inflammatory response by mediating palmitoylation of NLRP3 and GSDMD. Palmitoylates NLRP3 to promote inflammasome assembly and activation. Activates pyroptosis by catalyzing palmitoylation of gasdermin-D (GSDMD), thereby promoting membrane translocation and pore formation of GSDMD. In Mus musculus (Mouse), this protein is Palmitoyltransferase ZDHHC5 (Zdhhc5).